The primary structure comprises 358 residues: MASVSLRKLDKSYGALRIVKGIDLEINDGEFVVFVGPSGCGKSTTLRMVAGLESITGGEVKIGDRVVNQLPPRERDIAMVFQDYALYPHKTVRENMGFSLKVRGVSASQANASIDEAAKMLGIEHLLDRRPGQLSGGQRQRVAMGRAIVRRPQVFLFDEPLSNLDAKLRGQVRTEIKRLHQQLGTTIIYVTHDQVEAMTLADRIVILRGGDIEQVGTPDEVYNRPESVFVGGFVGAPAMNFARARVNGDRLAFSDGNSLPMAAIRPSRETGLEGRDVIVGIRPEHFGPAEGFDSQLAVSVQVVEPLGSDTLVHFSLGDAALTARMPPQLRPTPNEELRIGVDPSKVHLFDATTERSIH.

Residues 4 to 234 (VSLRKLDKSY…PESVFVGGFV (231 aa)) enclose the ABC transporter domain. ATP is bound at residue 36 to 43 (GPSGCGKS).

The protein belongs to the ABC transporter superfamily. In terms of assembly, the complex is probably composed of two ATP-binding proteins (SmoE), two transmembrane proteins (SmoG and SmoH) and a solute-binding protein (SmoF).

It is found in the cell inner membrane. Functionally, part of the ABC transporter complex SmoEFGH involved in sulfoquinovosyl glycerol (SQGro) uptake. Responsible for energy coupling to the transport system. The sequence is that of Sulfoquinovosyl glycerol transport ATP-binding protein SmoE from Agrobacterium fabrum (strain C58 / ATCC 33970) (Agrobacterium tumefaciens (strain C58)).